We begin with the raw amino-acid sequence, 237 residues long: Leucyl/phenylalanyl-tRNA--protein transferase (237 aa).

This sequence belongs to the L/F-transferase family.

It is found in the cytoplasm. The enzyme catalyses N-terminal L-lysyl-[protein] + L-leucyl-tRNA(Leu) = N-terminal L-leucyl-L-lysyl-[protein] + tRNA(Leu) + H(+). The catalysed reaction is N-terminal L-arginyl-[protein] + L-leucyl-tRNA(Leu) = N-terminal L-leucyl-L-arginyl-[protein] + tRNA(Leu) + H(+). It carries out the reaction L-phenylalanyl-tRNA(Phe) + an N-terminal L-alpha-aminoacyl-[protein] = an N-terminal L-phenylalanyl-L-alpha-aminoacyl-[protein] + tRNA(Phe). In terms of biological role, functions in the N-end rule pathway of protein degradation where it conjugates Leu, Phe and, less efficiently, Met from aminoacyl-tRNAs to the N-termini of proteins containing an N-terminal arginine or lysine. The polypeptide is Leucyl/phenylalanyl-tRNA--protein transferase (aat) (Vibrio vulnificus (strain CMCP6)).